A 156-amino-acid chain; its full sequence is MRSSAKQEELVKAFKALLKEEKFSSQGEIVLALQDQGFDNINQSKVSRMLTKFGAVRTRNAKMEMVYCLPAELGVPTTSSPLKNLVLDIDYNDAVVVIHTSPGAAQLIARLLDSLGKAEGILGTIAGDDTIFTTPANGFTVKDLYEAILELFEQEL.

Belongs to the ArgR family.

The protein resides in the cytoplasm. Its pathway is amino-acid biosynthesis; L-arginine biosynthesis [regulation]. Functionally, regulates arginine biosynthesis genes. The chain is Arginine repressor from Citrobacter koseri (strain ATCC BAA-895 / CDC 4225-83 / SGSC4696).